The chain runs to 125 residues: Phosphoribosyl-AMP cyclohydrolase (125 aa).

Asp-74 is a Mg(2+) binding site. Cys-75 contributes to the Zn(2+) binding site. Mg(2+) is bound by residues Asp-76 and Asp-78. Positions 92 and 99 each coordinate Zn(2+).

It belongs to the PRA-CH family. In terms of assembly, homodimer. It depends on Mg(2+) as a cofactor. Zn(2+) is required as a cofactor.

The protein localises to the cytoplasm. It catalyses the reaction 1-(5-phospho-beta-D-ribosyl)-5'-AMP + H2O = 1-(5-phospho-beta-D-ribosyl)-5-[(5-phospho-beta-D-ribosylamino)methylideneamino]imidazole-4-carboxamide. Its pathway is amino-acid biosynthesis; L-histidine biosynthesis; L-histidine from 5-phospho-alpha-D-ribose 1-diphosphate: step 3/9. Catalyzes the hydrolysis of the adenine ring of phosphoribosyl-AMP. The polypeptide is Phosphoribosyl-AMP cyclohydrolase (Geotalea uraniireducens (strain Rf4) (Geobacter uraniireducens)).